The following is a 248-amino-acid chain: Phosphomannomutase (248 aa).

Asp14 serves as the catalytic Nucleophile. Asp14 and Asp16 together coordinate Mg(2+). Asp16 acts as the Proton donor/acceptor in catalysis. The alpha-D-mannose 1-phosphate site is built by Arg23, Arg125, Arg136, Arg143, Ser181, and Asp183. Mg(2+) contacts are provided by Asp209, Phe221, and Thr226.

The protein belongs to the eukaryotic PMM family. In terms of assembly, homodimer. Requires Mg(2+) as cofactor.

The protein resides in the cytoplasm. It carries out the reaction alpha-D-mannose 1-phosphate = D-mannose 6-phosphate. Its pathway is nucleotide-sugar biosynthesis; GDP-alpha-D-mannose biosynthesis; alpha-D-mannose 1-phosphate from D-fructose 6-phosphate: step 2/2. Its function is as follows. Catalyzes the interconversion of mannose-6-phosphate to mannose-1-phosphate, the precursor for the synthesis of GDP-mannose. GDP-mannose is an essential sugar nucleotide for the synthesis of D-mannose-containing cell wall polysaccharides (galactomannans and glucomannans), glycolipids, glycoproteins and the antioxidant L-ascorbate. The protein is Phosphomannomutase of Oryza sativa subsp. indica (Rice).